The primary structure comprises 72 residues: Guanine nucleotide-binding protein subunit gamma (72 aa).

Residues 32–72 (MVSVAPPKANPSVSSKTKQQQHFKPGKATKDKATTKCCTIS) are disordered. Residue C68 is the site of S-palmitoyl cysteine attachment. C69 carries the post-translational modification Cysteine methyl ester. C69 is lipidated: S-farnesyl cysteine. The propeptide at 70-72 (TIS) is removed in mature form.

Belongs to the G protein gamma family. In terms of assembly, g proteins are composed of 3 units, alpha, beta and gamma. Binding of the beta-gamma subunit complex (git5-git11) to the alpha subunit (gpa2) facilitates interaction with GPCR git3.

The protein localises to the cell membrane. Functionally, gamma subunit of the heterotrimeric guanine nucleotide-binding protein (G protein) involved in glucose-induced cAMP signaling. The beta-gamma subunits (git5-git11) promote binding of the alpha subunit gpa2 to GPCR git3, which senses extracellular glucose, to activate cAMP-PKA signaling and repress sexual development and gluconeogenesis. The chain is Guanine nucleotide-binding protein subunit gamma (git11) from Schizosaccharomyces pombe (strain 972 / ATCC 24843) (Fission yeast).